The chain runs to 60 residues: Ribosome biogenesis protein Nop10 (60 aa).

The tract at residues 29-60 is disordered; sequence CDGPTENSAPAPFSPEDPYGEYRRRVRRRASE.

The protein belongs to the NOP10 family.

Involved in ribosome biogenesis; more specifically in 18S rRNA pseudouridylation and in cleavage of pre-rRNA. The protein is Ribosome biogenesis protein Nop10 of Halorubrum lacusprofundi (strain ATCC 49239 / DSM 5036 / JCM 8891 / ACAM 34).